The sequence spans 407 residues: Putative cell wall shaping protein YabE (407 aa).

The first 31 residues, 1–31, serve as a signal peptide directing secretion; sequence MKKLFSVKLSKSKVILVAACLLLAGSGTAYA. Residues 206-286 enclose the G5 domain; it reads ITRIEKVTDV…DKVIAVGTKQ (81 aa).

Its function is as follows. Suggested to be involved in cell wall modification. The sequence is that of Putative cell wall shaping protein YabE (yabE) from Bacillus subtilis (strain 168).